Reading from the N-terminus, the 107-residue chain is Proteinase inhibitor I-B (107 aa).

The first 22 residues, 1-22 (MVKFAHVVAFLLLASLFQPLTA), serve as a signal peptide directing secretion. Residues 23-39 (RDLEINVLQLDVSQSGC) constitute a propeptide that is removed on maturation.

It belongs to the protease inhibitor I13 (potato type I serine protease inhibitor) family.

It localises to the secreted. In Nicotiana tabacum (Common tobacco), this protein is Proteinase inhibitor I-B (TIMPA).